A 347-amino-acid chain; its full sequence is 4-hydroxy-2-oxovalerate aldolase 4 (347 aa).

Positions 9–259 (ITIVDTTLRD…DTGVDLFPLI (251 aa)) constitute a Pyruvate carboxyltransferase domain. Residues 17–18 (RD), Ser171, and His198 each bind substrate. Asp18 provides a ligand contact to Mn(2+). Residues His198 and His200 each coordinate Mn(2+). Tyr289 is a binding site for substrate.

The protein belongs to the 4-hydroxy-2-oxovalerate aldolase family.

It carries out the reaction (S)-4-hydroxy-2-oxopentanoate = acetaldehyde + pyruvate. The chain is 4-hydroxy-2-oxovalerate aldolase 4 from Rhodococcus opacus (strain B4).